Reading from the N-terminus, the 178-residue chain is Putative type II secretion system M-type protein YghD (178 aa).

Topologically, residues 1 to 39 (MLRDKFIHYFQQWRERQLSRGEHWLAQHLAGRSPREKGM) are cytoplasmic. A helical membrane pass occupies residues 40–60 (LLAAVVFLFSVGYYVLIWQPL). Over 61–178 (SERIEQQETI…NVQRLEFGRG (118 aa)) the chain is Periplasmic.

The protein belongs to the GSP M family.

It is found in the cell inner membrane. In terms of biological role, involved in a type II secretion system (T2SS, formerly general secretion pathway, GSP) for the export of folded proteins across the outer membrane. This Escherichia coli (strain K12) protein is Putative type II secretion system M-type protein YghD (yghD).